Here is a 199-residue protein sequence, read N- to C-terminus: MTEKIILASGSPFRKAMLINAGLDVEAVPADVDERALEAPLQDSGVSPEDVALVLAEAKATEVSERRPGALVLGCDQTLSLGDEVFHKPADMEGARRHLLALSGRTHQLNSAAVLVRDGKVLWRHVGIAGMTMRMLDPGFIGRHLALVGAKALASVGAYQIEGEGIQLFEKIEGDYFTIVGLPLLPLLAELRTLGAIDG.

Aspartate 76 (proton acceptor) is an active-site residue.

Belongs to the Maf family. YceF subfamily. The cofactor is a divalent metal cation.

Its subcellular location is the cytoplasm. It catalyses the reaction N(7)-methyl-GTP + H2O = N(7)-methyl-GMP + diphosphate + H(+). Its function is as follows. Nucleoside triphosphate pyrophosphatase that hydrolyzes 7-methyl-GTP (m(7)GTP). May have a dual role in cell division arrest and in preventing the incorporation of modified nucleotides into cellular nucleic acids. The chain is 7-methyl-GTP pyrophosphatase from Mesorhizobium japonicum (strain LMG 29417 / CECT 9101 / MAFF 303099) (Mesorhizobium loti (strain MAFF 303099)).